The primary structure comprises 196 residues: Small ribosomal subunit protein uS4m (196 aa).

Residues 88-154 form the S4 RNA-binding domain; sequence KRLDVILVRL…FKSNIRKNFQ (67 aa).

This sequence belongs to the universal ribosomal protein uS4 family.

It is found in the mitochondrion. This is Small ribosomal subunit protein uS4m (RPS4) from Marchantia polymorpha (Common liverwort).